We begin with the raw amino-acid sequence, 619 residues long: Alpha-(1,6)-fucosyltransferase (619 aa).

Residues 1–17 (MLLVRQLFGASANSWAR) are Cytoplasmic-facing. Residues 18 to 38 (ALIIFVLAWIGLVYVFVVKLT) traverse the membrane as a helical; Signal-anchor for type II membrane protein segment. The Lumenal portion of the chain corresponds to 39–619 (NTQGQQAAGE…TAKLPLYAGI (581 aa)). Intrachain disulfides connect C253–C315, C261–C279, and C267–C271. A GT23 domain is found at 255–539 (NARKLVCKLN…PDAAHRFKSL (285 aa)). The short motif at 345–351 (PRPPYLP) is the SH3-binding element. The tract at residues 411–412 (RR) is important for donor substrate binding. A disulfide bond links C511 and C518. An SH3 domain is found at 548–609 (QNAHNRRVVI…PSFKVEEKVD (62 aa)).

The protein belongs to the glycosyltransferase 23 family. Requires Mn(2+) as cofactor. The cofactor is Mg(2+).

The protein localises to the golgi apparatus. The protein resides in the golgi stack membrane. It catalyses the reaction N(4)-{beta-D-GlcNAc-(1-&gt;2)-alpha-D-Man-(1-&gt;3)-[beta-D-GlcNAc-(1-&gt;2)-alpha-D-Man-(1-&gt;6)]-beta-D-Man-(1-&gt;4)-beta-D-GlcNAc-(1-&gt;4)-beta-D-GlcNAc}-L-asparaginyl-[protein] + GDP-beta-L-fucose = an N(4)-{beta-D-GlcNAc-(1-&gt;2)-alpha-D-Man-(1-&gt;3)-[beta-D-GlcNAc-(1-&gt;2)-alpha-D-Man-(1-&gt;6)]-beta-D-Man-(1-&gt;4)-beta-D-GlcNAc-(1-&gt;4)-[alpha-L-Fuc-(1-&gt;6)]-beta-D-GlcNAc}-L-asparaginyl-[protein] + GDP + H(+). It functions in the pathway protein modification; protein glycosylation. Catalyzes the addition of fucose in alpha 1-6 linkage to the first GlcNAc residue, next to the peptide chains in N-glycans. The addition is prevented if the GlcNAc residue is already fucosylated. This Drosophila melanogaster (Fruit fly) protein is Alpha-(1,6)-fucosyltransferase (FucT6).